Reading from the N-terminus, the 379-residue chain is Cytochrome b (379 aa).

Transmembrane regions (helical) follow at residues 33 to 53, 77 to 98, 113 to 133, and 178 to 198; these read FGSL…FLAM, WLIR…YLHI, WNIG…GYVL, and FFAF…LHLL. Positions 83 and 97 each coordinate heme b. Heme b contacts are provided by H182 and H196. H201 lines the a ubiquinone pocket. The next 4 membrane-spanning stretches (helical) occupy residues 226–246, 288–308, 320–340, and 347–367; these read YKDL…ALFY, LGGV…PILH, ISQL…WIGG, and YIII…VLNP.

This sequence belongs to the cytochrome b family. In terms of assembly, the cytochrome bc1 complex contains 3 respiratory subunits (MT-CYB, CYC1 and UQCRFS1), 2 core proteins (UQCRC1 and UQCRC2) and probably 6 low-molecular weight proteins. It depends on heme b as a cofactor.

Its subcellular location is the mitochondrion inner membrane. In terms of biological role, component of the ubiquinol-cytochrome c reductase complex (complex III or cytochrome b-c1 complex) that is part of the mitochondrial respiratory chain. The b-c1 complex mediates electron transfer from ubiquinol to cytochrome c. Contributes to the generation of a proton gradient across the mitochondrial membrane that is then used for ATP synthesis. This is Cytochrome b (mt-cyb) from Anguilla mossambica (African longfin eel).